Reading from the N-terminus, the 122-residue chain is Large ribosomal subunit protein uL14 (122 aa).

This sequence belongs to the universal ribosomal protein uL14 family. As to quaternary structure, part of the 50S ribosomal subunit. Forms a cluster with proteins L3 and L19. In the 70S ribosome, L14 and L19 interact and together make contacts with the 16S rRNA in bridges B5 and B8.

In terms of biological role, binds to 23S rRNA. Forms part of two intersubunit bridges in the 70S ribosome. This Geotalea daltonii (strain DSM 22248 / JCM 15807 / FRC-32) (Geobacter daltonii) protein is Large ribosomal subunit protein uL14.